The primary structure comprises 322 residues: 4-diphosphocytidyl-2-C-methyl-D-erythritol kinase (322 aa).

Residue Lys18 is part of the active site. 130-140 (PMGAGLGGGSS) serves as a coordination point for ATP. Asp172 is an active-site residue.

Belongs to the GHMP kinase family. IspE subfamily.

The enzyme catalyses 4-CDP-2-C-methyl-D-erythritol + ATP = 4-CDP-2-C-methyl-D-erythritol 2-phosphate + ADP + H(+). It functions in the pathway isoprenoid biosynthesis; isopentenyl diphosphate biosynthesis via DXP pathway; isopentenyl diphosphate from 1-deoxy-D-xylulose 5-phosphate: step 3/6. Functionally, catalyzes the phosphorylation of the position 2 hydroxy group of 4-diphosphocytidyl-2C-methyl-D-erythritol. The polypeptide is 4-diphosphocytidyl-2-C-methyl-D-erythritol kinase (Psychrobacter arcticus (strain DSM 17307 / VKM B-2377 / 273-4)).